The primary structure comprises 416 residues: MPESQIIELGTLGQIPLYSLERALQDPLRAVKLRRQIVSQHQATGNIDFTTDGSALPYEGYDYKAVLGACCENVIGYMPIPVGVAGPIKINGKMVFLPMSTTEGALVASTNRGCMAINAGGGVTALVLGDGMTRAPIVRFPSLEEAGAAKQWLGSDAGFLIIEDAFNASSRFARLQNIKATAVGSDLYIRFTASTGDAMGMNMISKGVEQALEAMQKHGFESMDVVSLSGNFCADKKPAAVNWIEGRGKTVTAQATIPEHAVRETLKTSVEALVELNVSKNLVGSAVAGALGGFNAHAANVVTAIYLATGQDPAQNVQSSNTLTVMKNVNGDLQISVFMPSIEVGTVGGGTVLGPQKAMLHMMGVQGADPEQPGRNAQELALLVAAGVLAGELSLCSALSAGSLVKSHLTHNRKKG.

The Charge relay system role is filled by glutamate 103. The N-linked (GlcNAc...) asparagine glycan is linked to asparagine 167. Lysine 236 acts as the Charge relay system in catalysis. Asparagine 277 is a glycosylation site (N-linked (GlcNAc...) asparagine). Aspartate 312 acts as the Charge relay system in catalysis. The helical transmembrane segment at 380 to 400 (LALLVAAGVLAGELSLCSALS) threads the bilayer. Residue histidine 408 is the Proton donor of the active site.

The protein belongs to the HMG-CoA reductase family.

The protein resides in the membrane. The enzyme catalyses (R)-mevalonate + 2 NADP(+) + CoA = (3S)-3-hydroxy-3-methylglutaryl-CoA + 2 NADPH + 2 H(+). Its pathway is metabolic intermediate biosynthesis; (R)-mevalonate biosynthesis; (R)-mevalonate from acetyl-CoA: step 3/3. Its function is as follows. 3-hydroxy-3-methylglutaryl coenzyme A reductase; part of the gene cluster that mediates the biosynthesis of the diterpene ent-pimara-8(14),15-diene (PD). Within the cluster, the HMG-CoA reductase AN1593 functions in the mevalonate pathway, which produces isoprenoid precursors. The geranylgeranyl pyrophosphate (GGPP) synthase AN1592 is needed in the formation of GGPP, the precursor for diterpenes. Lastly, the pimaradiene synthase pbcA performs the 2 cyclization steps that convert GGPP to ent-pimara-8(14),15-diene. The putative roles of the remaining cluster enzymes in ent-pimara-8(14),15-diene biosynthesis is unclear. The cytochrome P450 monooxygenase AN1598, the glutathione S-transferase AN1595, the oxidoreductases AN1596 and AN1597 probably function as decorative enzymes. It is possible that in biological conditions the compound is oxidized to ent-pimara-8(14),15-dien-19-oic acid, which is a bioactive diterpene compound predominant in many plant extracts. The chain is 3-hydroxy-3-methylglutaryl coenzyme A reductase AN1593 from Emericella nidulans (strain FGSC A4 / ATCC 38163 / CBS 112.46 / NRRL 194 / M139) (Aspergillus nidulans).